We begin with the raw amino-acid sequence, 1263 residues long: Condensin complex subunit dpy-26 (1263 aa).

A compositionally biased stretch (polar residues) spans 1 to 10; sequence MDVPSSSNVT. The disordered stretch occupies residues 1 to 29; that stretch reads MDVPSSSNVTGRRKRQVLDDDEDDGFRST. The stretch at 691 to 725 forms a coiled coil; that stretch reads NEQMDETEVEERNEQDVQRELEDIALAADEVAELM. Disordered stretches follow at residues 1098-1118 and 1225-1263; these read YQAADERPNNQPTTSTYGTAN and FSNLMRRPKAVPVRKGRGAGGQPTTSDLGAIVEEEEMEE. A compositionally biased stretch (polar residues) spans 1106-1118; sequence NNQPTTSTYGTAN. The segment covering 1230–1241 has biased composition (basic residues); sequence RRPKAVPVRKGR.

As to quaternary structure, component of the condensin I complex, which contains the mix-1/SMC2 and smc-4/SMC4 heterodimer, and three non SMC subunits that probably regulate the complex: dpy-26, capg-1 and dpy-28. Within the complex, interacts with dpy-28, mix-1, smc-4 and capg-1. Component of the dosage compensation complex, which consists of the condensin I-like components mix-1/SMC2 and dpy-27/SMC4, and the three non SMC subunits dpy-26, capg-1 and dpy-28. Within the complex, interacts with dpy-27, dpy-28, mix-1 and capg-1. The interaction with dpy-27 is required for dpy-27 protein stability. Interacts with smcl-1. Expressed in embryos and in somatic and germline tissues in L4 stage larvae (at protein level).

The protein localises to the nucleus. It is found in the chromosome. Required for both chromosome condensation and segregation and for X-chromosome dosage compensation depending on its binding partners. Member of the condensin I complex, a complex required for conversion of interphase chromatin into mitotic-like condense chromosomes and for proper chromosome segregation in mitosis and meiosis. As a member of the condensin I complex, further controls the crossover number and distribution in meiosis by restricting double strand break formation, probably by influencing higher-order chromosome structure. Plays a role in robust cytokinesis upon presence of chromatin obstructions. Also a member of the condensin I-like dosage compensation complex that associates specifically with hermaphrodite X chromosomes to reduce their gene transcription during interphase, possibly through chromatin reorganization. As a member of the dosage compensation complex, also binds to regulatory regions of the autosomal her-1 gene, required for male development, possibly contributing to its repression in hermaphrodites. The chain is Condensin complex subunit dpy-26 from Caenorhabditis elegans.